Consider the following 297-residue polypeptide: uncharacterized protein (297 aa).

Disordered stretches follow at residues 19–133 (NEVD…EEKE), 147–214 (AEDD…VGIA), and 226–277 (EKTS…SKEA). Basic and acidic residues predominate over residues 41–52 (EEPKNEKEKHDD). A compositionally biased stretch (acidic residues) spans 77–87 (PAEDDEEDEEF). Positions 88–101 (PSQSYGPSIPSNFR) are enriched in polar residues. Composition is skewed to basic and acidic residues over residues 147–161 (AEDDEKNFQPKREEW) and 236–268 (IHQKKRDEKVKDAGYAQGERRPFDREKDMEVRG).

This is an uncharacterized protein from Caenorhabditis elegans.